Reading from the N-terminus, the 609-residue chain is UvrABC system protein C (609 aa).

Residues 13 to 91 (HEPGVYRMYD…IKLYQPRYNV (79 aa)) enclose the GIY-YIG domain. Residues 201 to 236 (QQVLDYLIGKMEQASRNLDFEQAARYRDQIQAVRSV) enclose the UVR domain.

It belongs to the UvrC family. As to quaternary structure, interacts with UvrB in an incision complex.

It is found in the cytoplasm. The UvrABC repair system catalyzes the recognition and processing of DNA lesions. UvrC both incises the 5' and 3' sides of the lesion. The N-terminal half is responsible for the 3' incision and the C-terminal half is responsible for the 5' incision. This Haemophilus influenzae (strain 86-028NP) protein is UvrABC system protein C.